Consider the following 792-residue polypeptide: Phenylalanine--tRNA ligase beta subunit (792 aa).

Positions 39 to 147 constitute a tRNA-binding domain; sequence GESLGQVVVA…DDAPVGQALA (109 aa). The region spanning 400 to 475 is the B5 domain; that stretch reads PQPARIRLRR…RIHGYDRVPT (76 aa). Mg(2+) contacts are provided by Asp453, Asp459, Glu462, and Glu463. An FDX-ACB domain is found at 698 to 791; the sequence is SRFPSVRRDL…IEREHRARIR (94 aa).

Belongs to the phenylalanyl-tRNA synthetase beta subunit family. Type 1 subfamily. Tetramer of two alpha and two beta subunits. Mg(2+) serves as cofactor.

It localises to the cytoplasm. The catalysed reaction is tRNA(Phe) + L-phenylalanine + ATP = L-phenylalanyl-tRNA(Phe) + AMP + diphosphate + H(+). The protein is Phenylalanine--tRNA ligase beta subunit of Xanthomonas euvesicatoria pv. vesicatoria (strain 85-10) (Xanthomonas campestris pv. vesicatoria).